The sequence spans 226 residues: PKHD-type hydroxylase TERTU_2553 (226 aa).

Residues K78 to S177 form the Fe2OG dioxygenase domain. The Fe cation site is built by H96, D98, and H158. R168 contributes to the 2-oxoglutarate binding site.

It depends on Fe(2+) as a cofactor. L-ascorbate serves as cofactor.

The chain is PKHD-type hydroxylase TERTU_2553 from Teredinibacter turnerae (strain ATCC 39867 / T7901).